We begin with the raw amino-acid sequence, 283 residues long: Protein-L-isoaspartate O-methyltransferase (283 aa).

The active site involves Ser122.

It belongs to the methyltransferase superfamily. L-isoaspartyl/D-aspartyl protein methyltransferase family.

It localises to the cytoplasm. It catalyses the reaction [protein]-L-isoaspartate + S-adenosyl-L-methionine = [protein]-L-isoaspartate alpha-methyl ester + S-adenosyl-L-homocysteine. Catalyzes the methyl esterification of L-isoaspartyl residues in peptides and proteins that result from spontaneous decomposition of normal L-aspartyl and L-asparaginyl residues. It plays a role in the repair and/or degradation of damaged proteins. The sequence is that of Protein-L-isoaspartate O-methyltransferase from Leptothrix cholodnii (strain ATCC 51168 / LMG 8142 / SP-6) (Leptothrix discophora (strain SP-6)).